The following is a 276-amino-acid chain: Probable endonuclease 4 (276 aa).

Residues histidine 70, histidine 108, glutamate 144, aspartate 177, histidine 180, histidine 211, aspartate 224, histidine 226, and glutamate 256 each contribute to the Zn(2+) site.

The protein belongs to the AP endonuclease 2 family. It depends on Zn(2+) as a cofactor.

It catalyses the reaction Endonucleolytic cleavage to 5'-phosphooligonucleotide end-products.. Functionally, endonuclease IV plays a role in DNA repair. It cleaves phosphodiester bonds at apurinic or apyrimidinic (AP) sites, generating a 3'-hydroxyl group and a 5'-terminal sugar phosphate. The sequence is that of Probable endonuclease 4 from Metamycoplasma arthritidis (strain 158L3-1) (Mycoplasma arthritidis).